The following is a 342-amino-acid chain: N-acetyl-gamma-glutamyl-phosphate reductase (342 aa).

The active site involves Cys-149.

It belongs to the NAGSA dehydrogenase family. Type 1 subfamily.

It is found in the cytoplasm. It catalyses the reaction N-acetyl-L-glutamate 5-semialdehyde + phosphate + NADP(+) = N-acetyl-L-glutamyl 5-phosphate + NADPH + H(+). It functions in the pathway amino-acid biosynthesis; L-arginine biosynthesis; N(2)-acetyl-L-ornithine from L-glutamate: step 3/4. Catalyzes the NADPH-dependent reduction of N-acetyl-5-glutamyl phosphate to yield N-acetyl-L-glutamate 5-semialdehyde. The chain is N-acetyl-gamma-glutamyl-phosphate reductase from Aromatoleum aromaticum (strain DSM 19018 / LMG 30748 / EbN1) (Azoarcus sp. (strain EbN1)).